We begin with the raw amino-acid sequence, 684 residues long: Glycine--tRNA ligase beta subunit (684 aa).

This sequence belongs to the class-II aminoacyl-tRNA synthetase family. As to quaternary structure, tetramer of two alpha and two beta subunits.

Its subcellular location is the cytoplasm. It carries out the reaction tRNA(Gly) + glycine + ATP = glycyl-tRNA(Gly) + AMP + diphosphate. This is Glycine--tRNA ligase beta subunit from Pseudomonas fluorescens (strain ATCC BAA-477 / NRRL B-23932 / Pf-5).